The chain runs to 182 residues: UPF0301 protein NGK_1355 (182 aa).

The protein belongs to the UPF0301 (AlgH) family.

This is UPF0301 protein NGK_1355 from Neisseria gonorrhoeae (strain NCCP11945).